The primary structure comprises 636 residues: Chaperone protein DnaK (636 aa).

Position 196 is a phosphothreonine; by autocatalysis (Thr196). Positions Leu591 to Lys636 are disordered. Basic and acidic residues predominate over residues Pro614 to Val624.

Belongs to the heat shock protein 70 family.

Functionally, acts as a chaperone. This chain is Chaperone protein DnaK, found in Solibacter usitatus (strain Ellin6076).